The chain runs to 155 residues: 6,7-dimethyl-8-ribityllumazine synthase (155 aa).

5-amino-6-(D-ribitylamino)uracil-binding positions include phenylalanine 24, 58–60, and 82–84; these read AFE and AVI. Position 87–88 (87–88) interacts with (2S)-2-hydroxy-3-oxobutyl phosphate; it reads ST. The active-site Proton donor is histidine 90. Position 115 (phenylalanine 115) interacts with 5-amino-6-(D-ribitylamino)uracil. A (2S)-2-hydroxy-3-oxobutyl phosphate-binding site is contributed by arginine 129.

The protein belongs to the DMRL synthase family.

The catalysed reaction is (2S)-2-hydroxy-3-oxobutyl phosphate + 5-amino-6-(D-ribitylamino)uracil = 6,7-dimethyl-8-(1-D-ribityl)lumazine + phosphate + 2 H2O + H(+). It functions in the pathway cofactor biosynthesis; riboflavin biosynthesis; riboflavin from 2-hydroxy-3-oxobutyl phosphate and 5-amino-6-(D-ribitylamino)uracil: step 1/2. Functionally, catalyzes the formation of 6,7-dimethyl-8-ribityllumazine by condensation of 5-amino-6-(D-ribitylamino)uracil with 3,4-dihydroxy-2-butanone 4-phosphate. This is the penultimate step in the biosynthesis of riboflavin. This is 6,7-dimethyl-8-ribityllumazine synthase from Acetivibrio thermocellus (strain ATCC 27405 / DSM 1237 / JCM 9322 / NBRC 103400 / NCIMB 10682 / NRRL B-4536 / VPI 7372) (Clostridium thermocellum).